Reading from the N-terminus, the 401-residue chain is Argininosuccinate synthase (401 aa).

8–16 lines the ATP pocket; sequence AYSGGLDTS. L-citrulline is bound at residue Y85. An ATP-binding site is contributed by G115. 3 residues coordinate L-aspartate: T117, N121, and D122. N121 is an L-citrulline binding site. R125, S173, E258, and Y270 together coordinate L-citrulline.

This sequence belongs to the argininosuccinate synthase family. Type 1 subfamily. In terms of assembly, homotetramer.

It is found in the cytoplasm. It catalyses the reaction L-citrulline + L-aspartate + ATP = 2-(N(omega)-L-arginino)succinate + AMP + diphosphate + H(+). It participates in amino-acid biosynthesis; L-arginine biosynthesis; L-arginine from L-ornithine and carbamoyl phosphate: step 2/3. The chain is Argininosuccinate synthase from Staphylococcus aureus (strain MRSA252).